The primary structure comprises 478 residues: Sphingomyelin synthase-related protein 1 (478 aa).

A compositionally biased stretch (low complexity) spans 1 to 22 (MPAGSRAGSRLRSGSLPRPSRL). The disordered stretch occupies residues 1–65 (MPAGSRAGSR…TAEEVEKEMA (65 aa)). One can recognise an SAM domain in the interval 75-141 (WTTKHVAVWL…MLSVRKLQKI (67 aa)). 6 helical membrane passes run 216-236 (ILSC…MVIV), 264-284 (FSMT…VLLL), 295-315 (LCSL…VTSL), 341-361 (AIWS…DYMF), 385-405 (FLHT…LAAH), and 410-430 (IDVF…HTLA). Topologically, residues 431 to 478 (NTRAYHQSRRARIWFPMFSFFECNVNGTVPNEYCWPFSKPAIMKRLIG) are cytoplasmic.

Belongs to the sphingomyelin synthase family. In terms of tissue distribution, expressed ubiquitously with highest levels in macrophages and testis.

It localises to the endoplasmic reticulum membrane. The catalysed reaction is an N-acylsphing-4-enine + a 1,2-diacyl-sn-glycero-3-phosphoethanolamine = an N-acylsphing-4-enine 1-phosphoethanolamine + a 1,2-diacyl-sn-glycerol. The enzyme catalyses an N-acylsphinganine + a 1,2-diacyl-sn-glycero-3-phosphoethanolamine = an N-acylsphinganine-1-phosphoethanolamine + a 1,2-diacyl-sn-glycerol. It carries out the reaction an N-acyl-(4R)-4-hydroxysphinganine + a 1,2-diacyl-sn-glycero-3-phosphoethanolamine = an N-acyl-(4R)-4-hydroxysphinganine-1-phosphoethanolamine + a 1,2-diacyl-sn-glycerol. It catalyses the reaction N-hexadecanoylsphinganine + a 1,2-diacyl-sn-glycero-3-phosphoethanolamine = N-hexadecanoyl-sphinganine-1-phosphoethanolamine + a 1,2-diacyl-sn-glycerol. The catalysed reaction is N-hexadecanoyl-(4R)-hydroxysphinganine + a 1,2-diacyl-sn-glycero-3-phosphoethanolamine = N-hexadecanoyl-(4R)-hydroxysphinganine-1-phosphoethanolamine + a 1,2-diacyl-sn-glycerol. It functions in the pathway sphingolipid metabolism. Functionally, synthesizes sphingolipids through transfer of a phosphatidyl head group from a glycerophospholipid on to the primary hydroxyl of a ceramide in the lumen of the endoplasmic reticulum. Catalyzes the synthesis of ceramide phosphoethanolamines (CPEs) (such as N-acylsphing-4-enine 1-phosphoethanolamine) by transferring phosphoethanolamine head group, which is smaller and more hydrophilic than the phosphocholine (PC) headgroup transferred in the canonical sphingomyelin synthesis (SMS) reaction by SMS1 or SMS2, from a phosphatidylethanolamine (1,2-diacyl-sn-glycero-3-phosphoethanolamine, PE) to a ceramide (such as N-acylsphing-4-enine). The larger PC prevents an efficient fit in the enzyme's catalytic pocket, leading to little or no SMS activity. In vitro, in the absence of ceramide, it has PLC activity with preference for phosphatidylinositol and phosphatidic acid, but also hydrolyzes phosphatidylethanolamine. The protein is Sphingomyelin synthase-related protein 1 of Mus musculus (Mouse).